We begin with the raw amino-acid sequence, 468 residues long: Argininosuccinate lyase (468 aa).

It belongs to the lyase 1 family. Argininosuccinate lyase subfamily.

It localises to the cytoplasm. It catalyses the reaction 2-(N(omega)-L-arginino)succinate = fumarate + L-arginine. It participates in amino-acid biosynthesis; L-arginine biosynthesis; L-arginine from L-ornithine and carbamoyl phosphate: step 3/3. In Methanothermobacter thermautotrophicus (strain ATCC 29096 / DSM 1053 / JCM 10044 / NBRC 100330 / Delta H) (Methanobacterium thermoautotrophicum), this protein is Argininosuccinate lyase.